The sequence spans 90 residues: DNA-binding protein HU (90 aa).

Belongs to the bacterial histone-like protein family. In terms of assembly, homodimer.

Histone-like DNA-binding protein which is capable of wrapping DNA to stabilize it, and thus to prevent its denaturation under extreme environmental conditions. The sequence is that of DNA-binding protein HU (hup) from Pasteurella multocida (strain Pm70).